The sequence spans 829 residues: Protein roadkill (829 aa).

Low complexity-rich tracts occupy residues 24–36 (EQQQ…QQQQ), 122–140 (TPAA…QAAP), and 266–288 (SSSS…SSSS). Disordered stretches follow at residues 24–47 (EQQQ…CCEN), 106–142 (SSLQ…APSV), 266–296 (SSSS…SHHS), and 313–400 (HLNQ…NQQQ). The segment covering 313–322 (HLNQQQHHHP) has biased composition (basic residues). 3 stretches are compositionally biased toward low complexity: residues 323-353 (LSAS…QQQH), 372-382 (SSSSSSSSSSS), and 389-400 (SSSSSNSNNQQQ). In terms of domain architecture, MATH spans 486 to 616 (KFSYMWTINN…EDKLTIFCEV (131 aa)). Residues 655–722 (SDVTLSVGGR…IYTGKAPNLE (68 aa)) form the BTB domain.

It belongs to the Tdpoz family. In terms of assembly, interacts with ci and gft/CUL3. As to expression, expressed near the anterio-posterior compartment boundary of antenna, leg and wing disks.

Its subcellular location is the nucleus. It participates in protein modification; protein ubiquitination. Functionally, involved in segment polarity. In complex with gft/CUL3, promotes ubiquitination of ci and its subsequent degradation by the proteasome, which results in hh signaling attenuation. This regulation may be important during eye formation for proper packing of ommatidia into a hexagonal array. In Drosophila melanogaster (Fruit fly), this protein is Protein roadkill (rdx).